Reading from the N-terminus, the 367-residue chain is Inhibin alpha chain (367 aa).

The N-terminal stretch at 1–20 is a signal peptide; sequence MVPPLPLLLLLLLVPQGGHG. The propeptide occupies 21–63; it reads CQGSELDREIVLAKVRALFLDALGPPAVTGEGGDPGVRRLPRR. Positions 64 to 233 are cleaved as a propeptide — inhibin alpha N-terminal region; that stretch reads HALGGFARRG…PPSGGERTRR (170 aa). N-linked (GlcNAc...) asparagine glycans are attached at residues asparagine 147 and asparagine 269. Intrachain disulfides connect cysteine 263-cysteine 329, cysteine 292-cysteine 364, and cysteine 296-cysteine 366.

It belongs to the TGF-beta family. In terms of assembly, dimeric, linked by one or more disulfide bonds. Activin B is a dimer of alpha and beta-B. Inhibin A is a dimer of alpha and beta-A. Inhibin B is a dimer of alpha and beta-B. Interacts with TGFBR3L; this interaction regulates female fertility. Post-translationally, proteolytic processing yields a number of bioactive forms, consisting either solely of the mature alpha chain, of the most N-terminal propeptide linked through a disulfide bond to the mature alpha chain, or of the entire proprotein.

It is found in the secreted. Its function is as follows. Inhibins and activins inhibit and activate, respectively, the secretion of follitropin by the pituitary gland. Inhibins/activins are involved in regulating a number of diverse functions such as hypothalamic and pituitary hormone secretion, gonadal hormone secretion, germ cell development and maturation, erythroid differentiation, insulin secretion, nerve cell survival, embryonic axial development or bone growth, depending on their subunit composition. Inhibins appear to oppose the functions of activins. Functionally, inhibin A is a dimer of alpha/INHA and beta-A/INHBA that functions as a feedback regulator in the hypothalamic-pituitary-gonadal (HPG) axis. Inhibits the secretion of FSH from the anterior pituitary gland by acting on pituitary gonadotrope cells. Antagonizes activin A by binding to the proteoglycan, betaglycan, and forming a stable complex with and, thereby, sequestering type II activin receptors while excluding type I receptor. Inhibin B is a dimer of alpha and beta-B that plays a crucial role in the regulation of the reproductive system by inhibiting the secretion of follicle-stimulating hormone (FSH) from the anterior pituitary gland. Thereby, maintains reproductive homeostasis in both males and females. Acts as a more potent suppressor of FSH release than inhibin A. Functions as competitive receptor antagonist binding activin type II receptors with high affinity in the presence of the TGF-beta type III coreceptor/TGFBR3L. This Equus caballus (Horse) protein is Inhibin alpha chain (INHA).